Consider the following 697-residue polypeptide: MATKSFLKLAADLSSFTDSSPFAKLLDSCIKSKLSAIYVRYVHASVIKSGFSNEIFIQNRLIDAYSKCGSLEDGRQVFDKMPQRNIYTWNSVVTGLTKLGFLDEADSLFRSMPERDQCTWNSMVSGFAQHDRCEEALCYFAMMHKEGFVLNEYSFASVLSACSGLNDMNKGVQVHSLIAKSPFLSDVYIGSALVDMYSKCGNVNDAQRVFDEMGDRNVVSWNSLITCFEQNGPAVEALDVFQMMLESRVEPDEVTLASVISACASLSAIKVGQEVHGRVVKNDKLRNDIILSNAFVDMYAKCSRIKEARFIFDSMPIRNVIAETSMISGYAMAASTKAARLMFTKMAERNVVSWNALIAGYTQNGENEEALSLFCLLKRESVCPTHYSFANILKACADLAELHLGMQAHVHVLKHGFKFQSGEEDDIFVGNSLIDMYVKCGCVEEGYLVFRKMMERDCVSWNAMIIGFAQNGYGNEALELFREMLESGEKPDHITMIGVLSACGHAGFVEEGRHYFSSMTRDFGVAPLRDHYTCMVDLLGRAGFLEEAKSMIEEMPMQPDSVIWGSLLAACKVHRNITLGKYVAEKLLEVEPSNSGPYVLLSNMYAELGKWEDVMNVRKSMRKEGVTKQPGCSWIKIQGHDHVFMVKDKSHPRKKQIHSLLDILIAEMRPEQDHTEIGSLSSEEMDYSSNLLWDNAM.

16 PPR repeats span residues 18-53 (DSSP…GFSN), 54-84 (EIFI…MPQR), 85-115 (NIYT…MPER), 116-150 (DQCT…GFVL), 151-185 (NEYS…PFLS), 186-216 (DVYI…MGDR), 217-251 (NVVS…RVEP), 252-282 (DEVT…VVKN), 288-322 (DIIL…NVIA), 324-349 (TSMI…MAER), 350-384 (NVVS…SVCP), 385-419 (THYS…GFKF), 426-456 (DIFV…MMER), 457-491 (DCVS…GEKP), 492-527 (DHIT…GVAP), and 528-558 (LRDH…MPMQ). The tract at residues 563-638 (IWGSLLAACK…QPGCSWIKIQ (76 aa)) is type E motif. The type E(+) motif stretch occupies residues 639–669 (GHDHVFMVKDKSHPRKKQIHSLLDILIAEMR).

It belongs to the PPR family. PCMP-E subfamily.

In Arabidopsis thaliana (Mouse-ear cress), this protein is Pentatricopeptide repeat-containing protein At2g13600 (PCMP-E76).